The primary structure comprises 202 residues: Matrix protein (202 aa).

The segment at 9 to 31 is disordered; that stretch reads KNRRDEDTQKSSPASAPLDDDDL. Residues 35–38 carry the PPXY motif motif; it reads PPEY. Residues 115–151 form an essential for glycoprotein binding region; the sequence is KLRRTFIFQWADSRGPLEGEELEYSQEITWDDDTEFV.

The protein belongs to the lyssavirus matrix protein family. In terms of assembly, homomultimer. Interacts with nucleoprotein and with the cytoplasmic domain of glycoprotein. Interacts with host ATP6V1A; this interaction plays an important role in virion uncoating after viral entry.

The protein resides in the virion membrane. It is found in the host endomembrane system. Its subcellular location is the host cytoplasm. Functionally, plays a major role in assembly, budding and uncoating of virion after membrane fusion. Completely covers the ribonucleoprotein coil and keep it in condensed bullet-shaped form. Inhibits viral transcription and stimulates replication. Plays a major role in early induction of TRAIL-mediated apoptosis in infected neurons. Inhibits the integrated stress response (ISR) in the infected cell by blocking the formation of stress granules. This is Matrix protein (M) from Rabies virus (strain SAD B19) (RABV).